The sequence spans 178 residues: UPF0302 protein BcerKBAB4_1445 (178 aa).

Belongs to the UPF0302 family.

The chain is UPF0302 protein BcerKBAB4_1445 from Bacillus mycoides (strain KBAB4) (Bacillus weihenstephanensis).